We begin with the raw amino-acid sequence, 952 residues long: Leucine--tRNA ligase (952 aa).

The 'HIGH' region signature appears at 66–77; the sequence is PYPSGAGLHVGH. The 'KMSKS' region signature appears at 722-726; it reads KMGKS. K725 contacts ATP.

This sequence belongs to the class-I aminoacyl-tRNA synthetase family.

It localises to the cytoplasm. It catalyses the reaction tRNA(Leu) + L-leucine + ATP = L-leucyl-tRNA(Leu) + AMP + diphosphate. The chain is Leucine--tRNA ligase from Corynebacterium glutamicum (strain R).